The primary structure comprises 925 residues: Translation initiation factor IF-2 (925 aa).

Residues 190-329 are disordered; that stretch reads PAAPTSEAAP…RRRDEREAAV (140 aa). Pro residues-rich tracts occupy residues 199-209, 217-238, and 279-288; these read PPEPEPTPLPA, PVRPPAPPAPAKPTPAPAPAPR, and RPVPAQPAPQ. The span at 289 to 307 shows a compositional bias: low complexity; that stretch reads TPTRSGSGIAKKGAITKAG. Residues 320–329 are compositionally biased toward basic and acidic residues; it reads RRRDEREAAV. One can recognise a tr-type G domain in the interval 417 to 589; sequence VRPPVVTIMG…LLLVADYELE (173 aa). The segment at 426–433 is G1; that stretch reads GHVDHGKT. Position 426 to 433 (426 to 433) interacts with GTP; sequence GHVDHGKT. The G2 stretch occupies residues 451 to 455; that stretch reads GITQH. The G3 stretch occupies residues 476 to 479; the sequence is DTPG. GTP contacts are provided by residues 476-480 and 530-533; these read DTPGH and NKVD. A G4 region spans residues 530–533; it reads NKVD. Residues 566–568 form a G5 region; sequence SAK.

This sequence belongs to the TRAFAC class translation factor GTPase superfamily. Classic translation factor GTPase family. IF-2 subfamily.

The protein localises to the cytoplasm. Its function is as follows. One of the essential components for the initiation of protein synthesis. Protects formylmethionyl-tRNA from spontaneous hydrolysis and promotes its binding to the 30S ribosomal subunits. Also involved in the hydrolysis of GTP during the formation of the 70S ribosomal complex. The sequence is that of Translation initiation factor IF-2 from Gloeobacter violaceus (strain ATCC 29082 / PCC 7421).